An 84-amino-acid polypeptide reads, in one-letter code: MQCRAGCGACCIAPSISSPLPGMPAGKPAGVRCLHLDENHLCGLFGRPERPAVCGQFGADPEICGDSREQALALIAEWEVITAA.

Belongs to the UPF0153 family.

The sequence is that of UPF0153 protein PA1578.1 from Pseudomonas aeruginosa (strain ATCC 15692 / DSM 22644 / CIP 104116 / JCM 14847 / LMG 12228 / 1C / PRS 101 / PAO1).